Consider the following 414-residue polypeptide: tRNA (guanine-N(7)-)-methyltransferase non-catalytic subunit WDR4 (414 aa).

An N-acetylalanine modification is found at A2. 4 WD repeats span residues 60–99, 101–140, 144–184, and 187–227; these read QGSD…CLSV, TVVR…GGGR, GHLS…IESF, and GHTE…ELHC. The interval 377–414 is disordered; that stretch reads EERLQQQLEKKRRQAPPPGPNGPTKKMRAGELAQGCSS.

It belongs to the WD repeat TRM82 family. In terms of assembly, non-catalytic component of the METTL1-WDR4 complex, composed of METTL1 and WDR4. Interacts with FEN1; the interaction is direct.

Its subcellular location is the nucleus. It localises to the chromosome. It functions in the pathway tRNA modification; N(7)-methylguanine-tRNA biosynthesis. In terms of biological role, non-catalytic component of the METTL1-WDR4 methyltransferase complex required for the formation of N(7)-methylguanine in a subset of RNA species, such as tRNAs, mRNAs and microRNAs (miRNAs). In the METTL1-WDR4 methyltransferase complex, WDR4 acts as a scaffold for tRNA-binding. Required for the formation of N(7)-methylguanine at position 46 (m7G46) in a large subset of tRNAs that contain the 5'-RAGGU-3' motif within the variable loop. M7G46 interacts with C13-G22 in the D-loop to stabilize tRNA tertiary structure and protect tRNAs from decay. Also required for the formation of N(7)-methylguanine at internal sites in a subset of mRNAs. Also required for methylation of a specific subset of miRNAs, such as let-7. Independently of METTL1, also plays a role in genome stability: localizes at the DNA replication site and regulates endonucleolytic activities of FEN1. This is tRNA (guanine-N(7)-)-methyltransferase non-catalytic subunit WDR4 from Bos taurus (Bovine).